A 94-amino-acid chain; its full sequence is Defensin alpha 5 (94 aa).

A signal peptide spans 1-19 (MRTIAILAAILLVALQAQA). Intrachain disulfides connect C65–C93, C67–C82, and C72–C92.

It belongs to the alpha-defensin family. Homodimer. Homotetramer. Interacts with B.antracis lef/lethal factor. Post-translationally, glycosylated. Proteolytically cleaved at Arg-62 by trypsin. Both the propeptide form proHD5/HD5(20-94) and HD5(56-94) are cleaved into the lumenal peptide form HD5(63-94) by trypsin. Unprocessed proHD5 exerts antimicrobial activities, but peptide potency is enhanced by peptide processing. Proteolytically cleaved in duodenal fluid; derived fragments are antimicrobially active against commensal bacteria (in vitro).

The protein localises to the secreted. The protein resides in the cytoplasmic vesicle. It is found in the secretory vesicle. Host-defense peptide that maintains sterility in the urogenital system. Has antimicrobial activity against a wide range of bacteria, including Gram-negative E.coli, P.aeruginosa and S.typhimurium, and Gram-positive E.aerogenes, S.aureus, B.cereus, E.faecium and L.monocytogenes. Confers resistance to intestinal infection by S.typhimurium. Exhibits antimicrobial activity against enteric commensal bacteria such as B.adolescentis, L.acidophilus, B.breve, L.fermentum, B.longum and S.thermophilus. Binds to bacterial membranes and causes membrane disintegration. Induces the secretion of the chemokine IL-8 by intestinal epithelial cells. Binds to B.antracis lef/lethal factor, a major virulence factor from B.anthracis, and neutralizes its enzymatic activity. This Pan troglodytes (Chimpanzee) protein is Defensin alpha 5 (DEFA5).